The chain runs to 161 residues: Small ribosomal subunit protein eS6 (161 aa).

Positions 119-161 (VLLGEEEPEDADDDGDSDVDADEATDTDAGSEEDNDDDIADAE) are disordered. The span at 122–161 (GEEEPEDADDDGDSDVDADEATDTDAGSEEDNDDDIADAE) shows a compositional bias: acidic residues.

It belongs to the eukaryotic ribosomal protein eS6 family.

The polypeptide is Small ribosomal subunit protein eS6 (Haloquadratum walsbyi (strain DSM 16790 / HBSQ001)).